Reading from the N-terminus, the 51-residue chain is MRNKAKGFPNPISFNGNKANNADEHASKRPDGTTRDRPQERMRSSNHFNSL.

The tract at residues 1-51 (MRNKAKGFPNPISFNGNKANNADEHASKRPDGTTRDRPQERMRSSNHFNSL) is disordered. Positions 21-43 (NADEHASKRPDGTTRDRPQERMR) are enriched in basic and acidic residues.

The protein belongs to the SspK family.

The protein localises to the spore core. The protein is Small, acid-soluble spore protein K of Shouchella clausii (strain KSM-K16) (Alkalihalobacillus clausii).